Reading from the N-terminus, the 997-residue chain is Chromosomal passenger complex protein bir1 (997 aa).

BIR repeat units lie at residues 25-99 and 120-194; these read RLDT…PWAY and REQT…VFFT. The Zn(2+) site is built by C163, C166, H183, and C190. Disordered regions lie at residues 217–329, 370–527, 682–701, 755–782, and 817–838; these read EDLT…FSKG, TVSD…ENDE, TRDV…NHEE, SPKL…EKEA, and RTSV…ETKV. A compositionally biased stretch (polar residues) spans 240–252; that stretch reads TLNFSPSRKNNLN. The segment covering 288–299 has biased composition (basic residues); it reads PRRKNKSPKKSK. Residues 311–320 are compositionally biased toward acidic residues; that stretch reads SDEDEDDDDL. A compositionally biased stretch (polar residues) spans 370-392; sequence TVSDITGHQSVTDESDEQNNCMS. The span at 408 to 423 shows a compositional bias: low complexity; the sequence is SVVSKSKEISSSVSSV. The segment covering 426–451 has biased composition (basic and acidic residues); the sequence is EQNHTEKQVAIETPEQQKVEKEDEHL. Composition is skewed to polar residues over residues 463 to 476 and 485 to 512; these read KQPI…SSPD and RVSS…FSNI. Residues 756–772 are compositionally biased toward polar residues; the sequence is PKLQSKNNQTVEAVNTE. A compositionally biased stretch (basic and acidic residues) spans 773-782; the sequence is TSDKLQEKEA. Residues 817 to 830 show a composition bias toward polar residues; the sequence is RTSVQNGTRSVSKN.

Component of the CPC complex at least composed of ark1, bir1 and pic1. Interacts with the mitotic checkpoint complex (MCC) subunit mad3. In terms of processing, phosphorylated by ark1.

The protein localises to the nucleus. Its subcellular location is the cytoplasm. It is found in the cytoskeleton. The protein resides in the spindle. It localises to the chromosome. The protein localises to the centromere. Component of the chromosomal passenger complex (CPC), a complex that acts as a key regulator of chromosome segregation and cytokinesis. Has a role in chromosome segregation by recruiting condensin and ark1 kinase to appropriate sites as the cell progresses through mitosis. Ark1 activity depends upon bir1 function and phosphorylation. Ark1 with bir1 function is required for full-scale association with kinetochores and formation of a complex with mad3. The sequence is that of Chromosomal passenger complex protein bir1 (bir1) from Schizosaccharomyces pombe (strain 972 / ATCC 24843) (Fission yeast).